Reading from the N-terminus, the 212-residue chain is Calaxin (212 aa).

EF-hand domains lie at T65–G100, T101–K136, and G146–L181. 14 residues coordinate Ca(2+): D78, D80, D82, C84, E89, D114, N116, D118, E125, D159, D161, D163, K165, and D170.

In terms of assembly, component of the outer dynein arm-docking complex along with ODAD1, ODAD2, ODAD3 and ODAD4. As to expression, expressed in trachea multiciliated cells.

It localises to the cytoplasm. It is found in the cytoskeleton. The protein resides in the cilium axoneme. Its subcellular location is the cell projection. The protein localises to the cilium. It localises to the flagellum. Its function is as follows. Component of the outer dynein arm-docking complex (ODA-DC) that mediates outer dynein arms (ODA) binding onto the doublet microtubule. Seems to regulate the assembly of both ODAs and their axonemal docking complex onto ciliary microtubules. Regulates ciliary and flagellar motility and is required for cilia-driven determination of body laterality. The chain is Calaxin (CLXN) from Bos taurus (Bovine).